The following is a 192-amino-acid chain: Ion-translocating oxidoreductase complex subunit B (192 aa).

The hydrophobic stretch occupies residues Met1 to Ser26. The region spanning Glu32–Val91 is the 4Fe-4S domain. Positions 49, 52, 57, 74, 117, 120, 123, 127, 147, 150, 153, and 157 each coordinate [4Fe-4S] cluster. 4Fe-4S ferredoxin-type domains lie at Met108 to Arg137 and Ala138 to Val167.

Belongs to the 4Fe4S bacterial-type ferredoxin family. RnfB subfamily. As to quaternary structure, the complex is composed of six subunits: RnfA, RnfB, RnfC, RnfD, RnfE and RnfG. It depends on [4Fe-4S] cluster as a cofactor.

It is found in the cell inner membrane. Functionally, part of a membrane-bound complex that couples electron transfer with translocation of ions across the membrane. In Citrobacter koseri (strain ATCC BAA-895 / CDC 4225-83 / SGSC4696), this protein is Ion-translocating oxidoreductase complex subunit B.